The following is a 411-amino-acid chain: Imidazolonepropionase (411 aa).

Fe(3+)-binding residues include His78 and His80. Zn(2+) is bound by residues His78 and His80. 4-imidazolone-5-propanoate-binding residues include Arg87, Tyr150, and His183. N-formimidoyl-L-glutamate is bound at residue Tyr150. His248 lines the Fe(3+) pocket. His248 is a Zn(2+) binding site. A 4-imidazolone-5-propanoate-binding site is contributed by Gln251. Residue Asp322 coordinates Fe(3+). Asp322 contributes to the Zn(2+) binding site. The N-formimidoyl-L-glutamate site is built by Asn324 and Gly326. Position 327 (Thr327) interacts with 4-imidazolone-5-propanoate.

Belongs to the metallo-dependent hydrolases superfamily. HutI family. It depends on Zn(2+) as a cofactor. Fe(3+) is required as a cofactor.

The protein localises to the cytoplasm. It carries out the reaction 4-imidazolone-5-propanoate + H2O = N-formimidoyl-L-glutamate. It functions in the pathway amino-acid degradation; L-histidine degradation into L-glutamate; N-formimidoyl-L-glutamate from L-histidine: step 3/3. Catalyzes the hydrolytic cleavage of the carbon-nitrogen bond in imidazolone-5-propanoate to yield N-formimidoyl-L-glutamate. It is the third step in the universal histidine degradation pathway. The chain is Imidazolonepropionase from Flavobacterium psychrophilum (strain ATCC 49511 / DSM 21280 / CIP 103535 / JIP02/86).